A 261-amino-acid chain; its full sequence is NAD kinase (261 aa).

The active-site Proton acceptor is Asp54. NAD(+)-binding positions include 54 to 55, 123 to 124, Arg150, Asp152, and 163 to 168; these read DG, ND, and TAYSLS.

It belongs to the NAD kinase family. Requires a divalent metal cation as cofactor.

It localises to the cytoplasm. It catalyses the reaction NAD(+) + ATP = ADP + NADP(+) + H(+). Functionally, involved in the regulation of the intracellular balance of NAD and NADP, and is a key enzyme in the biosynthesis of NADP. Catalyzes specifically the phosphorylation on 2'-hydroxyl of the adenosine moiety of NAD to yield NADP. In Caldicellulosiruptor bescii (strain ATCC BAA-1888 / DSM 6725 / KCTC 15123 / Z-1320) (Anaerocellum thermophilum), this protein is NAD kinase.